A 325-amino-acid polypeptide reads, in one-letter code: Eukaryotic translation initiation factor 3 subunit I (325 aa).

WD repeat units lie at residues 8-47 (GHER…RLGT), 50-91 (GHTG…ALLK), 144-183 (CNDS…VLVN), and 186-225 (EHSR…HQKT). Position 219 is a phosphothreonine (threonine 219). Lysine 264 carries the N6-acetyllysine modification. A Glycyl lysine isopeptide (Lys-Gly) (interchain with G-Cter in ubiquitin) cross-link involves residue lysine 282. Residues 283–324 (GHFGLINSVAFHPDGKSYSSGGEDGYVRIHYFDPQYFEFEFE) form a WD 5 repeat. Tyrosine 308 is subject to Phosphotyrosine.

This sequence belongs to the eIF-3 subunit I family. In terms of assembly, component of the eukaryotic translation initiation factor 3 (eIF-3) complex, which is composed of 13 subunits: EIF3A, EIF3B, EIF3C, EIF3D, EIF3E, EIF3F, EIF3G, EIF3H, EIF3I, EIF3J, EIF3K, EIF3L and EIF3M. The eIF-3 complex appears to include 3 stable modules: module A is composed of EIF3A, EIF3B, EIF3G and EIF3I; module B is composed of EIF3F, EIF3H, and EIF3M; and module C is composed of EIF3C, EIF3D, EIF3E, EIF3K and EIF3L. EIF3C of module C binds EIF3B of module A and EIF3H of module B, thereby linking the three modules. EIF3J is a labile subunit that binds to the eIF-3 complex via EIF3B. The eIF-3 complex interacts with RPS6KB1 under conditions of nutrient depletion. Mitogenic stimulation leads to binding and activation of a complex composed of MTOR and RPTOR, leading to phosphorylation and release of RPS6KB1 and binding of EIF4B to eIF-3. Post-translationally, phosphorylated by TGF-beta type II receptor.

It is found in the cytoplasm. Functionally, component of the eukaryotic translation initiation factor 3 (eIF-3) complex, which is required for several steps in the initiation of protein synthesis. The eIF-3 complex associates with the 40S ribosome and facilitates the recruitment of eIF-1, eIF-1A, eIF-2:GTP:methionyl-tRNAi and eIF-5 to form the 43S pre-initiation complex (43S PIC). The eIF-3 complex stimulates mRNA recruitment to the 43S PIC and scanning of the mRNA for AUG recognition. The eIF-3 complex is also required for disassembly and recycling of post-termination ribosomal complexes and subsequently prevents premature joining of the 40S and 60S ribosomal subunits prior to initiation. The eIF-3 complex specifically targets and initiates translation of a subset of mRNAs involved in cell proliferation, including cell cycling, differentiation and apoptosis, and uses different modes of RNA stem-loop binding to exert either translational activation or repression. In Pongo abelii (Sumatran orangutan), this protein is Eukaryotic translation initiation factor 3 subunit I.